The chain runs to 562 residues: Protein wntless (562 aa).

Residues 1 to 13 (MSGTILENLSGRK) are Cytoplasmic-facing. The helical transmembrane segment at 14 to 34 (LSILVSSLLLCQVACFLIGGL) threads the bilayer. The Lumenal segment spans residues 35–239 (YAPVPAGHQI…AIHQNGGFTQ (205 aa)). N-linked (GlcNAc...) asparagine glycans are attached at residues Asn-58 and Asn-103. The helical transmembrane segment at 240 to 260 (VWLLLKSVLFPFIIGIMVWFW) threads the bilayer. Topologically, residues 261-270 (RRVHILQRSP) are cytoplasmic. A helical transmembrane segment spans residues 271 to 291 (ALLEYMLLYLGGALSFLNLPL). Residues 292–311 (EYLTLSFEMPYMLLLSDVRQ) lie on the Lumenal side of the membrane. Residues 312–332 (GIFYAMLLSFWLVFAGEHMLI) traverse the membrane as a helical segment. The Cytoplasmic portion of the chain corresponds to 333–344 (QDSPNKSTIRSR). Residues 345–365 (YWKHLSAVVVGCISLFVFDIC) traverse the membrane as a helical segment. At 366-390 (ERGMQLRNPFYSIWTTPLGAKVAMS) the chain is on the lumenal side. A helical membrane pass occupies residues 391 to 411 (FIVLAGVSAGIYFLFLCYMVW). At 412–441 (KVFKDIGDKRTSLPSMSQARRLHYEGLIYR) the chain is on the cytoplasmic side. The chain crosses the membrane as a helical span at residues 442-462 (FKFLMLATLLCAGLTVAGFIM). The Lumenal portion of the chain corresponds to 463–482 (GQMAEGHWKWNEDIEIQLTS). Residues 483–503 (AFLTGVYGMWNIYIFALLILY) traverse the membrane as a helical segment. Topologically, residues 504-562 (APSHKQWPTMRHSDETTQSNENIVASAASEEIEFSNLPSDSNPSEISSLTSFTRKVAFD) are cytoplasmic. The interval 538–562 (SNLPSDSNPSEISSLTSFTRKVAFD) is disordered. The segment covering 539 to 556 (NLPSDSNPSEISSLTSFT) has biased composition (polar residues).

Belongs to the wntless family. In terms of assembly, interacts with wg; in the Golgi. Interacts with Vps35, a component of the retromer complex; wls stability is regulated by Vps35.

It localises to the presynaptic cell membrane. It is found in the postsynaptic cell membrane. The protein resides in the cell membrane. The protein localises to the endoplasmic reticulum membrane. Its subcellular location is the endosome membrane. It localises to the golgi apparatus membrane. Functionally, a segment polarity gene required for wingless (wg)-dependent patterning processes, acting in both wg-sending cells and wg-target cells. In non-neuronal cells wls directs wg secretion. The wls traffic loop encompasses the Golgi, the cell surface, an endocytic compartment and a retrograde route leading back to the Golgi, and involves clathrin-mediated endocytosis and the retromer complex (a conserved protein complex consisting of Vps35 and Vps26). In neuronal cells (the larval motorneuron NMJ), the wg signal moves across the synapse via the release of wls-containing exosome-like vesicles. Postsynaptic wls is required for the trafficking of fz2 through the fz2-interacting protein Grip. The polypeptide is Protein wntless (Drosophila mojavensis (Fruit fly)).